The following is an 83-amino-acid chain: MNPLIAASSVIAAGLAIGLAAIGPGVGQGTVAGNAVEGIARQPEAEGKIRGTLLLSFAFMESLTIYGLVVALALLFANPFVGA.

Transmembrane regions (helical) follow at residues 3–23 and 57–77; these read PLIA…AAIG and FAFM…LLFA.

The protein belongs to the ATPase C chain family. In terms of assembly, F-type ATPases have 2 components, F(1) - the catalytic core - and F(0) - the membrane proton channel. F(1) has five subunits: alpha(3), beta(3), gamma(1), delta(1), epsilon(1). F(0) has four main subunits: a(1), b(1), b'(1) and c(10-14). The alpha and beta chains form an alternating ring which encloses part of the gamma chain. F(1) is attached to F(0) by a central stalk formed by the gamma and epsilon chains, while a peripheral stalk is formed by the delta, b and b' chains.

It is found in the plastid. It localises to the chloroplast thylakoid membrane. Its function is as follows. F(1)F(0) ATP synthase produces ATP from ADP in the presence of a proton or sodium gradient. F-type ATPases consist of two structural domains, F(1) containing the extramembraneous catalytic core and F(0) containing the membrane proton channel, linked together by a central stalk and a peripheral stalk. During catalysis, ATP synthesis in the catalytic domain of F(1) is coupled via a rotary mechanism of the central stalk subunits to proton translocation. Functionally, key component of the F(0) channel; it plays a direct role in translocation across the membrane. A homomeric c-ring of between 10-14 subunits forms the central stalk rotor element with the F(1) delta and epsilon subunits. The protein is ATP synthase subunit c, chloroplastic of Oedogonium cardiacum (Filamentous green alga).